Here is a 35-residue protein sequence, read N- to C-terminus: Photosystem II reaction center protein T (35 aa).

The helical transmembrane segment at alanine 3 to phenylalanine 23 threads the bilayer.

It belongs to the PsbT family. PSII is composed of 1 copy each of membrane proteins PsbA, PsbB, PsbC, PsbD, PsbE, PsbF, PsbH, PsbI, PsbJ, PsbK, PsbL, PsbM, PsbT, PsbY, PsbZ, Psb30/Ycf12, at least 3 peripheral proteins of the oxygen-evolving complex and a large number of cofactors. It forms dimeric complexes.

It localises to the plastid. The protein localises to the chloroplast thylakoid membrane. Functionally, found at the monomer-monomer interface of the photosystem II (PS II) dimer, plays a role in assembly and dimerization of PSII. PSII is a light-driven water plastoquinone oxidoreductase, using light energy to abstract electrons from H(2)O, generating a proton gradient subsequently used for ATP formation. The sequence is that of Photosystem II reaction center protein T from Gunnera chilensis (Chilean rhubarb).